The primary structure comprises 189 residues: UPF0398 protein LCK_00599 (189 aa).

The protein belongs to the UPF0398 family.

The polypeptide is UPF0398 protein LCK_00599 (Leuconostoc citreum (strain KM20)).